A 250-amino-acid polypeptide reads, in one-letter code: Cell division protein ZapD (250 aa).

It belongs to the ZapD family. Interacts with FtsZ.

Its subcellular location is the cytoplasm. Its function is as follows. Cell division factor that enhances FtsZ-ring assembly. Directly interacts with FtsZ and promotes bundling of FtsZ protofilaments, with a reduction in FtsZ GTPase activity. The chain is Cell division protein ZapD from Serratia proteamaculans (strain 568).